The chain runs to 130 residues: Small ribosomal subunit protein uS11 (130 aa).

Belongs to the universal ribosomal protein uS11 family. Part of the 30S ribosomal subunit. Interacts with proteins S7 and S18. Binds to IF-3.

Its function is as follows. Located on the platform of the 30S subunit, it bridges several disparate RNA helices of the 16S rRNA. Forms part of the Shine-Dalgarno cleft in the 70S ribosome. This is Small ribosomal subunit protein uS11 from Shewanella halifaxensis (strain HAW-EB4).